The chain runs to 265 residues: 4-hydroxy-tetrahydrodipicolinate reductase (265 aa).

Residues 7–12 (GASGRM), Asp-33, 96–98 (GTT), and 120–123 (AANM) each bind NAD(+). The active-site Proton donor/acceptor is His-153. His-154 serves as a coordination point for (S)-2,3,4,5-tetrahydrodipicolinate. Lys-157 serves as the catalytic Proton donor. 163–164 (GT) contributes to the (S)-2,3,4,5-tetrahydrodipicolinate binding site.

It belongs to the DapB family.

It is found in the cytoplasm. The catalysed reaction is (S)-2,3,4,5-tetrahydrodipicolinate + NAD(+) + H2O = (2S,4S)-4-hydroxy-2,3,4,5-tetrahydrodipicolinate + NADH + H(+). The enzyme catalyses (S)-2,3,4,5-tetrahydrodipicolinate + NADP(+) + H2O = (2S,4S)-4-hydroxy-2,3,4,5-tetrahydrodipicolinate + NADPH + H(+). It functions in the pathway amino-acid biosynthesis; L-lysine biosynthesis via DAP pathway; (S)-tetrahydrodipicolinate from L-aspartate: step 4/4. Functionally, catalyzes the conversion of 4-hydroxy-tetrahydrodipicolinate (HTPA) to tetrahydrodipicolinate. This chain is 4-hydroxy-tetrahydrodipicolinate reductase, found in Cupriavidus pinatubonensis (strain JMP 134 / LMG 1197) (Cupriavidus necator (strain JMP 134)).